Here is a 292-residue protein sequence, read N- to C-terminus: RWD domain-containing protein 2A (292 aa).

Residues 14–134 enclose the RWD domain; sequence LEMEMLFSMF…QWLQDNSASY (121 aa).

This is RWD domain-containing protein 2A (RWDD2A) from Macaca fascicularis (Crab-eating macaque).